The chain runs to 645 residues: DNA ligase (645 aa).

NAD(+) is bound by residues 30-34 and 72-73; these read DAEFD and SQ. Lys99 acts as the N6-AMP-lysine intermediate in catalysis. NAD(+) contacts are provided by Arg120, Glu163, Lys275, and Lys296. Positions 387, 390, 403, and 408 each coordinate Zn(2+). A BRCT domain is found at 564–645; the sequence is EEGAVLKGLS…EAFLNLIGKV (82 aa).

This sequence belongs to the NAD-dependent DNA ligase family. LigA subfamily. Mg(2+) serves as cofactor. Mn(2+) is required as a cofactor.

It catalyses the reaction NAD(+) + (deoxyribonucleotide)n-3'-hydroxyl + 5'-phospho-(deoxyribonucleotide)m = (deoxyribonucleotide)n+m + AMP + beta-nicotinamide D-nucleotide.. DNA ligase that catalyzes the formation of phosphodiester linkages between 5'-phosphoryl and 3'-hydroxyl groups in double-stranded DNA using NAD as a coenzyme and as the energy source for the reaction. It is essential for DNA replication and repair of damaged DNA. The protein is DNA ligase of Treponema denticola (strain ATCC 35405 / DSM 14222 / CIP 103919 / JCM 8153 / KCTC 15104).